The primary structure comprises 556 residues: Urocanate hydratase (556 aa).

Residues 52 to 53, Q130, 176 to 178, E196, R201, 242 to 243, 263 to 267, 273 to 274, and Y322 each bind NAD(+); these read GG, GMG, NA, QTSAH, and YL. C410 is a catalytic residue. G492 serves as a coordination point for NAD(+).

Belongs to the urocanase family. It depends on NAD(+) as a cofactor.

The protein resides in the cytoplasm. The enzyme catalyses 4-imidazolone-5-propanoate = trans-urocanate + H2O. It functions in the pathway amino-acid degradation; L-histidine degradation into L-glutamate; N-formimidoyl-L-glutamate from L-histidine: step 2/3. Catalyzes the conversion of urocanate to 4-imidazolone-5-propionate. The sequence is that of Urocanate hydratase from Bradyrhizobium sp. (strain ORS 278).